Consider the following 21-residue polypeptide: C-phycocyanin alpha subunit (21 aa).

It belongs to the phycobiliprotein family. Heterodimer of an alpha and a beta subunit, which further assembles into trimers and the trimers into hexamers. Contains one covalently linked bilin chromophore.

It localises to the cellular thylakoid membrane. Functionally, light-harvesting photosynthetic bile pigment-protein from the phycobiliprotein complex (phycobilisome, PBS). Phycocyanin is the major phycobiliprotein in the PBS rod. The sequence is that of C-phycocyanin alpha subunit from Anabaena sp. (strain L31).